Consider the following 193-residue polypeptide: Flagellin B3 (193 aa).

The propeptide occupies 1 to 12; sequence MFEFITDEDERG.

Belongs to the archaeal flagellin family. In terms of processing, glycosylated.

It localises to the archaeal flagellum. Flagellin is the subunit protein which polymerizes to form the filaments of archaeal flagella. This chain is Flagellin B3 (flaB3), found in Halobacterium salinarum (strain ATCC 700922 / JCM 11081 / NRC-1) (Halobacterium halobium).